The following is a 936-amino-acid chain: Lipoxygenase 2.1, chloroplastic (936 aa).

Residues 1-69 (MLTATKPLVG…LSADSNGAAV (69 aa)) form a disordered region. A compositionally biased stretch (low complexity) spans 47–59 (STSTSTTTTTTTT). Residues 88–217 (MKATVTVHMS…CTPDKRVFFP (130 aa)) enclose the PLAT domain. Residues 220-936 (SYLPSQTPKG…EMGIPNSISI (717 aa)) form the Lipoxygenase domain. The tract at residues 264-308 (LGNPDDDNNPTTRPVLGGKEHPYPRRCRTGRPRSKKDPFSEERSH) is disordered. A compositionally biased stretch (basic residues) spans 287–297 (PRRCRTGRPRS). Over residues 298–308 (KKDPFSEERSH) the composition is skewed to basic and acidic residues. Fe cation-binding residues include H587, H592, H777, N781, and I936.

The protein belongs to the lipoxygenase family. Fe cation serves as cofactor. Post-translationally, the N-terminus is blocked.

Its subcellular location is the plastid. The protein resides in the chloroplast. The enzyme catalyses (9Z,12Z)-octadecadienoate + O2 = (13S)-hydroperoxy-(9Z,11E)-octadecadienoate. It catalyses the reaction (9Z,12Z,15Z)-octadecatrienoate + O2 = (13S)-hydroperoxy-(9Z,11E,15Z)-octadecatrienoate. It participates in lipid metabolism; oxylipin biosynthesis. Functionally, plant lipoxygenase may be involved in a number of diverse aspects of plant physiology including growth and development, pest resistance, and senescence or responses to wounding. This enzyme is possibly involved in jasmonic acid synthesis. It exhibits linoleate 13-lipoxygenase and arachidonate 15-lipoxygenase activity. This is Lipoxygenase 2.1, chloroplastic (LOX2.1) from Hordeum vulgare (Barley).